Reading from the N-terminus, the 109-residue chain is Polyprenyl transferase subC (109 aa).

2 helical membrane passes run 39 to 59 (LFCV…NDWI) and 84 to 104 (QAFV…HVML).

It belongs to the UbiA prenyltransferase family. Mg(2+) serves as cofactor.

The protein localises to the membrane. Its pathway is secondary metabolite biosynthesis; terpenoid biosynthesis. In terms of biological role, polyprenyl transferase; part of the gene cluster that mediates the biosynthesis of the immunosuppressants subglutinols, meroterpenoids consisting of an alpha-pyrone (4-hydroxy-5,6-dimethyl-2-pyrone) moiety attached to a decalin core fused to a five-membered cyclic ether carrying a prenylside chain. The first step of the pathway is the synthesis of the alpha-pyrone moiety by the polyketide synthase subA via condensation of one acetyl-CoA starter unit with 3 malonyl-CoA units and 2 methylations. The alpha-pyrone is then combined with geranylgeranyl pyrophosphate (GGPP) formed by the GGPP synthase subD through the action of the prenyltransferase subC to yield a linear alpha-pyrone diterpenoid. Subsequent steps in the subglutinol biosynthetic pathway involve the decalin core formation, which is thought to be initiated by the epoxidation of the C10-C11 olefin by the FAD-dependent oxidoreductase subE. The following cyclization cascade would be catalyzed by the terpene cyclase subB. Lastly, the FAD-dependent dehydrogenase subF probably catalyzes the five-membered cyclic ether formation to complete the formation of subglutinol A. Subsequent redox reactions appear to give rise to subglutinol C and D, however, it remains unclear which enzymes are responsible for these transformations. SubD may have secondary function in the conversion of the identified subglutinols to subglutinol analog 45, which seems to be the major product of the cluster. In Metarhizium robertsii (strain ARSEF 23 / ATCC MYA-3075) (Metarhizium anisopliae (strain ARSEF 23)), this protein is Polyprenyl transferase subC.